Here is a 254-residue protein sequence, read N- to C-terminus: Triosephosphate isomerase (254 aa).

9–11 (NWK) contributes to the substrate binding site. The Electrophile role is filled by His-95. Glu-167 acts as the Proton acceptor in catalysis. Substrate is bound by residues Gly-173, Ser-213, and 234–235 (GG).

It belongs to the triosephosphate isomerase family. Homodimer.

It is found in the cytoplasm. The enzyme catalyses D-glyceraldehyde 3-phosphate = dihydroxyacetone phosphate. It functions in the pathway carbohydrate biosynthesis; gluconeogenesis. Its pathway is carbohydrate degradation; glycolysis; D-glyceraldehyde 3-phosphate from glycerone phosphate: step 1/1. Functionally, involved in the gluconeogenesis. Catalyzes stereospecifically the conversion of dihydroxyacetone phosphate (DHAP) to D-glyceraldehyde-3-phosphate (G3P). This chain is Triosephosphate isomerase, found in Roseiflexus castenholzii (strain DSM 13941 / HLO8).